We begin with the raw amino-acid sequence, 87 residues long: uncharacterized protein (87 aa).

To bacteriophage lambda exonuclease exo.

This is an uncharacterized protein from Escherichia coli (strain K12).